A 412-amino-acid polypeptide reads, in one-letter code: Peptidase T (412 aa).

Residue His-83 coordinates Zn(2+). The active site involves Asp-85. Asp-145 provides a ligand contact to Zn(2+). The active-site Proton acceptor is Glu-179. The Zn(2+) site is built by Glu-180, Asp-202, and His-384.

The protein belongs to the peptidase M20B family. The cofactor is Zn(2+).

Its subcellular location is the cytoplasm. It catalyses the reaction Release of the N-terminal residue from a tripeptide.. Cleaves the N-terminal amino acid of tripeptides. The polypeptide is Peptidase T (Fusobacterium nucleatum subsp. nucleatum (strain ATCC 25586 / DSM 15643 / BCRC 10681 / CIP 101130 / JCM 8532 / KCTC 2640 / LMG 13131 / VPI 4355)).